A 642-amino-acid chain; its full sequence is Voltage-gated potassium channel KCNC2 (642 aa).

At 1–233 (MGKIESNERV…EDPYSSRAAR (233 aa)) the chain is on the cytoplasmic side. Residues 45-98 (DCLTAAGDKLQPLPPPLSPPPRPPPLSPVPSGCFEGGAGNCSSHGGNGGNGGSD) form a disordered region. The span at 56–72 (PLPPPLSPPPRPPPLSP) shows a compositional bias: pro residues. The span at 78-98 (FEGGAGNCSSHGGNGGNGGSD) shows a compositional bias: gly residues. Zn(2+) is bound by residues His128, Cys134, Cys155, and Cys156. The chain crosses the membrane as a helical span at residues 234–254 (FIAFASLFFILVSITTFCLET). 2 N-linked (GlcNAc...) asparagine glycosylation sites follow: Asn263 and Asn270. Residues 287 to 307 (TYVEGVCVVWFTFEFLVRIVF) form a helical membrane-spanning segment. Residues 308 to 317 (SPNKLEFIKN) lie on the Cytoplasmic side of the membrane. Residues 318-338 (LLNIIDFVAILPFYLEVGLSG) form a helical membrane-spanning segment. A helical; Voltage-sensor membrane pass occupies residues 350–372 (FLRVVRFVRILRIFKLTRHFVGL). Over 373-385 (RVLGHTLRASTNE) the chain is Cytoplasmic. The helical transmembrane segment at 386–406 (FLLLIIFLALGVLIFATMIYY) threads the bilayer. Residues Thr441, Leu442, Gly443, and Tyr444 each contribute to the K(+) site. Residues 441–446 (TLGYGD) carry the Selectivity filter motif. A helical membrane pass occupies residues 457–477 (VGALCALAGVLTIAMPVPVIV). Over 478–642 (NNFGMYYSLA…RSRSPIPSIL (165 aa)) the chain is Cytoplasmic. Positions 542–576 (SVLSGDDSTGSEPPLSPPERLPIRRSSTRDKNRRG) are disordered. Ser604 bears the Phosphoserine mark.

The protein belongs to the potassium channel family. C (Shaw) (TC 1.A.1.2) subfamily. Kv3.2/KCNC2 sub-subfamily. In terms of assembly, homotetramer and heterotetramer with other channel-forming alpha subunits, such as KCNC1. Interacts with KCNC1. Homotetramer or heterotetramer channel activity is regulated by association with modulating ancillary subunits such as KCNE1, KCNE2 and KCNE3, creating a functionally diverse range of channel complexes. Interacts with KCNE1, KCNE2 and KCNE3. In terms of processing, phosphorylated by PKA in cortical synaptosomes. cAMP-dependent phosphorylation inhibits channel activity. Histamine H2 receptor- and PKA-induced phosphorylation extends action potential spike duration, reduces action potential spike amplitude, sustains maximum firing frequency in hippocampal interneurons; also reduces the incidence of high-frequency oscillations in hippocampal CA3 pyramidal cell layers. Weakly expressed in the brain at postnatal age day 7 (P7) and increased at P60. Not detectable in newborn hippocampus. Expressed weakly at P7 in the early developing hippocampus, increasing progressively and reaching a plateau of expression at P14 that is maintained throughout P51. Expressed in paravalbumin- and somatostain-containing inhibitory interneurons of the hippocampus; in the CA1/CA3 stratum oriens-alveus and stratum pyramidale and in cells within the hilus and subgranular layer of the dentate gyrus (DG). Strongly expressed in parvalbumin (PV)-containing fast-spiking GABAergic inhibitor interneurons in deep cortical layers V and VI. Also expressed in non-fast-spiking calbindin (CB)- and/or somatostatin (SOM)-containing interneurons in deep cortical layers V and VI. Expressed in starburst amacrine cells of the retina in the inner nuclear layer (INL) and ganglion cell layer (GCL). Expressed in the suprachiasmatic nucleus (SCN) (at protein level). Expressed in the early developing brain, increasing progressively until P14.

The protein localises to the cell membrane. It localises to the membrane. It is found in the perikaryon. Its subcellular location is the cell projection. The protein resides in the axon. The protein localises to the dendrite. It localises to the postsynaptic cell membrane. It is found in the presynaptic cell membrane. Its subcellular location is the synapse. The protein resides in the synaptosome. The protein localises to the apical cell membrane. It localises to the basolateral cell membrane. It catalyses the reaction K(+)(in) = K(+)(out). With respect to regulation, inhibited by millimolar levels of tetraethylammonium (TEA). Contrary to other channels, inhibited only by millimolar levels of 4-aminopyridine (4-AP). Inhibited by Stichodactyla helianthus peptide ShK. Voltage-gated potassium channel that mediates transmembrane potassium transport in excitable membranes, primarily in the brain. Contributes to the regulation of the fast action potential repolarization and in sustained high-frequency firing in neurons of the central nervous system. Homotetramer channels mediate delayed-rectifier voltage-dependent potassium currents that activate rapidly at high-threshold voltages and inactivate slowly. Forms tetrameric channels through which potassium ions pass in accordance with their electrochemical gradient. The channel alternates between opened and closed conformations in response to the voltage difference across the membrane. Can form functional homotetrameric and heterotetrameric channels that contain variable proportions of KCNC1, and possibly other family members as well; channel properties depend on the type of alpha subunits that are part of the channel. Channel properties may be modulated by either the association with ancillary subunits, such as KCNE1, KCNE2 and KCNE3 or indirectly by nitric oxide (NO) through a cGMP- and PKG-mediated signaling cascade, slowing channel activation and deactivation of delayed rectifier potassium channels. Contributes to fire sustained trains of very brief action potentials at high frequency in thalamocortical and suprachiasmatic nucleus (SCN) neurons, in hippocampal and neocortical interneurons and in retinal ganglion cells. Sustained maximal action potential firing frequency in inhibitory hippocampal interneurons is negatively modulated by histamine H2 receptor activation in a cAMP- and protein kinase (PKA) phosphorylation-dependent manner. Plays a role in maintaining the fidelity of synaptic transmission in neocortical GABAergic interneurons by generating action potential (AP) repolarization at nerve terminals, thus reducing spike-evoked calcium influx and GABA neurotransmitter release. Required for long-range synchronization of gamma oscillations over distance in the neocortex. Contributes to the modulation of the circadian rhythm of spontaneous action potential firing in suprachiasmatic nucleus (SCN) neurons in a light-dependent manner. This is Voltage-gated potassium channel KCNC2 from Mus musculus (Mouse).